A 352-amino-acid chain; its full sequence is ADP-ribosylation factor GTPase-activating protein GCS1 (352 aa).

Residues 11-127 (RRRLLQLQKI…LTCLCEDRVF (117 aa)) form the Arf-GAP domain. Residues 26–49 (CMDCGAPNPQWATPKFGAFICLEC) form a C4-type zinc finger. A compositionally biased stretch (low complexity) spans 138 to 151 (SKLSATSQTAASAT). 2 disordered regions span residues 138–181 (SKLS…ANFQ) and 196–231 (NQSRPDHLPPSQGGKYQGFGSTPAKPPQERSAGSSN). A Phosphothreonine modification is found at Thr151. At Ser157 the chain carries Phosphoserine. Thr161 carries the phosphothreonine modification. The residue at position 168 (Ser168) is a Phosphoserine. Polar residues predominate over residues 168-179 (SATPANSSNGAN). Thr170 bears the Phosphothreonine mark. At Ser260 the chain carries Phosphoserine. Positions 315 to 330 (NGNAEDSSTAGNTTHT) are enriched in polar residues. The tract at residues 315 to 352 (NGNAEDSSTAGNTTHTEYQKIDNNDKKNEQDEDKWDDF) is disordered. Positions 331–343 (EYQKIDNNDKKNE) are enriched in basic and acidic residues.

It is found in the cytoplasm. The protein localises to the mitochondrion. It localises to the perinuclear region. Its subcellular location is the golgi apparatus. In terms of biological role, GTPase-activating protein (GAP) for ARF1 and ARF2. Involved in intracellular vesicular transport. Required for transport from the trans-Golgi network. Implicated in the regulation of retrograde transport from the Golgi to the ER and in actin cytoskeletal organization. May be involved in the maintenance of mitochondrial morphology, possibly through organizing the actin cytoskeleton in Saccharomyces. This Saccharomyces cerevisiae (strain ATCC 204508 / S288c) (Baker's yeast) protein is ADP-ribosylation factor GTPase-activating protein GCS1 (GCS1).